The sequence spans 275 residues: 4-diphosphocytidyl-2-C-methyl-D-erythritol kinase (275 aa).

K14 is an active-site residue. 98–108 (PMGAGLGGGSS) contributes to the ATP binding site. The active site involves D140.

This sequence belongs to the GHMP kinase family. IspE subfamily.

It catalyses the reaction 4-CDP-2-C-methyl-D-erythritol + ATP = 4-CDP-2-C-methyl-D-erythritol 2-phosphate + ADP + H(+). It participates in isoprenoid biosynthesis; isopentenyl diphosphate biosynthesis via DXP pathway; isopentenyl diphosphate from 1-deoxy-D-xylulose 5-phosphate: step 3/6. In terms of biological role, catalyzes the phosphorylation of the position 2 hydroxy group of 4-diphosphocytidyl-2C-methyl-D-erythritol. The chain is 4-diphosphocytidyl-2-C-methyl-D-erythritol kinase from Francisella tularensis subsp. holarctica (strain FTNF002-00 / FTA).